Reading from the N-terminus, the 313-residue chain is Acetaldehyde dehydrogenase (313 aa).

13–16 (SGNI) is an NAD(+) binding site. The active-site Acyl-thioester intermediate is the cysteine 133. NAD(+)-binding positions include 164 to 172 (SAGPGTRAN) and asparagine 291.

Belongs to the acetaldehyde dehydrogenase family.

It catalyses the reaction acetaldehyde + NAD(+) + CoA = acetyl-CoA + NADH + H(+). The chain is Acetaldehyde dehydrogenase from Cupriavidus pinatubonensis (strain JMP 134 / LMG 1197) (Cupriavidus necator (strain JMP 134)).